The sequence spans 446 residues: Exodeoxyribonuclease 7 large subunit (446 aa).

Belongs to the XseA family. Heterooligomer composed of large and small subunits.

Its subcellular location is the cytoplasm. The catalysed reaction is Exonucleolytic cleavage in either 5'- to 3'- or 3'- to 5'-direction to yield nucleoside 5'-phosphates.. Its function is as follows. Bidirectionally degrades single-stranded DNA into large acid-insoluble oligonucleotides, which are then degraded further into small acid-soluble oligonucleotides. This Streptococcus pneumoniae serotype 19F (strain G54) protein is Exodeoxyribonuclease 7 large subunit.